Reading from the N-terminus, the 346-residue chain is Phosphoribosylformylglycinamidine cyclo-ligase (346 aa).

The protein belongs to the AIR synthase family.

The protein resides in the cytoplasm. It catalyses the reaction 2-formamido-N(1)-(5-O-phospho-beta-D-ribosyl)acetamidine + ATP = 5-amino-1-(5-phospho-beta-D-ribosyl)imidazole + ADP + phosphate + H(+). The protein operates within purine metabolism; IMP biosynthesis via de novo pathway; 5-amino-1-(5-phospho-D-ribosyl)imidazole from N(2)-formyl-N(1)-(5-phospho-D-ribosyl)glycinamide: step 2/2. The chain is Phosphoribosylformylglycinamidine cyclo-ligase from Prochlorococcus marinus (strain NATL1A).